Consider the following 74-residue polypeptide: MKKERTESLVAQALKNIGNDRYMLDNLVFVRVKQLNAGAKTLVNMDPKRHKLVDIAIREIAEGKIDIDRIDERN.

It belongs to the RNA polymerase subunit omega family. In terms of assembly, the RNAP catalytic core consists of 2 alpha, 1 beta, 1 beta' and 1 omega subunit. When a sigma factor is associated with the core the holoenzyme is formed, which can initiate transcription.

It catalyses the reaction RNA(n) + a ribonucleoside 5'-triphosphate = RNA(n+1) + diphosphate. Its function is as follows. Promotes RNA polymerase assembly. Latches the N- and C-terminal regions of the beta' subunit thereby facilitating its interaction with the beta and alpha subunits. The sequence is that of DNA-directed RNA polymerase subunit omega from Helicobacter pylori (strain Shi470).